The following is a 188-amino-acid chain: Ribosome-recycling factor (188 aa).

It belongs to the RRF family.

It is found in the cytoplasm. Functionally, responsible for the release of ribosomes from messenger RNA at the termination of protein biosynthesis. May increase the efficiency of translation by recycling ribosomes from one round of translation to another. The protein is Ribosome-recycling factor of Cereibacter sphaeroides (strain ATCC 17025 / ATH 2.4.3) (Rhodobacter sphaeroides).